The following is a 95-amino-acid chain: YcgL domain-containing protein APJL_0712 (95 aa).

The region spanning 4–88 (HLCAIYKSPK…PPENLLKTFL (85 aa)) is the YcgL domain.

In Actinobacillus pleuropneumoniae serotype 3 (strain JL03), this protein is YcgL domain-containing protein APJL_0712.